A 1126-amino-acid chain; its full sequence is Probable serine/threonine-protein kinase DDB_G0280111 (1126 aa).

Positions 16–295 (LNFVKQIAEG…NLLRNQQPLF (280 aa)) constitute a Protein kinase domain. Residues 22 to 30 (IAEGGFSYV) and Lys45 each bind ATP. The Proton acceptor role is filled by Asp147. Over residues 314-333 (NNNNNINNNNNNNIVNGKNI) the composition is skewed to low complexity. 4 disordered regions span residues 314–469 (NNNN…NGNN), 760–901 (LNLN…QQQQ), 944–1072 (TPSS…DEVR), and 1095–1126 (NKQSRMNNPNNLFDEGDSGFGDGEEEDEGLLN). A compositionally biased stretch (pro residues) spans 347-364 (TPTPPPPAPSQSPSPSPS). The span at 367-390 (VVNNIENNSNGLEHSNSNGNISQP) shows a compositional bias: polar residues. 3 stretches are compositionally biased toward low complexity: residues 413–422 (PPNNSNNSFD), 432–469 (NLSNNPFNVNSNDNSNSSNNNNNNNNNNNNNNNNNGNN), and 760–795 (LNLNNNNNNNNNSNNSNNSNNSNSGNLSGNASLNSS). Polar residues-rich tracts occupy residues 796 to 825 (FDNINSSNPFSTEPTFNPFSATTTNTSESG) and 833 to 845 (EPTSNPSPRYQQS). Positions 846–856 (NNNNNNNNNNN) are enriched in low complexity. Residues 857-866 (GTPISLTPGS) show a composition bias toward polar residues. Low complexity-rich tracts occupy residues 886 to 901 (QQQQHPQQQQQQQQQQ), 953 to 971 (PSTGPTTAAQQQQQQQQSQ), and 1003 to 1035 (NVNINNNNNSHVSAPHSLNSSSSSISSISNPNL). Residues 1095–1105 (NKQSRMNNPNN) show a composition bias toward polar residues. A compositionally biased stretch (acidic residues) spans 1108–1126 (DEGDSGFGDGEEEDEGLLN).

This sequence belongs to the protein kinase superfamily. Ser/Thr protein kinase family.

It carries out the reaction L-seryl-[protein] + ATP = O-phospho-L-seryl-[protein] + ADP + H(+). The catalysed reaction is L-threonyl-[protein] + ATP = O-phospho-L-threonyl-[protein] + ADP + H(+). The polypeptide is Probable serine/threonine-protein kinase DDB_G0280111 (Dictyostelium discoideum (Social amoeba)).